The sequence spans 168 residues: Photosystem I assembly protein Ycf3 (168 aa).

3 TPR repeats span residues 35-68, 72-105, and 120-153; these read AFTYYRDGMSAQSEGNYAEALQNYYEATRLEIDP, SYILYNIGLIHTSNGEHTKALEYYFRALERNPFL, and GEQAIRQGDSEIAEAWSDQAAEYWKQAISLTPGN.

Belongs to the Ycf3 family.

It localises to the plastid. The protein localises to the chloroplast thylakoid membrane. Functionally, essential for the assembly of the photosystem I (PSI) complex. May act as a chaperone-like factor to guide the assembly of the PSI subunits. This chain is Photosystem I assembly protein Ycf3, found in Piper cenocladum (Ant piper).